The following is a 626-amino-acid chain: Beta-galactosidase large subunit (626 aa).

The Proton donor role is filled by glutamate 466. Glutamate 534 (nucleophile) is an active-site residue.

The protein belongs to the glycosyl hydrolase 2 family. Heterodimer of a large (LacL) and a small subunit (LacM).

It catalyses the reaction Hydrolysis of terminal non-reducing beta-D-galactose residues in beta-D-galactosides.. In terms of biological role, component of a beta-galactosidase that displays activity with the artificial chromogenic substrate o-nitrophenyl-beta-D-galactopyranoside (ONPG). This is Beta-galactosidase large subunit from Leuconostoc lactis.